Consider the following 127-residue polypeptide: Major sperm protein 33 (127 aa).

An N-acetylalanine modification is found at Ala-2. One can recognise an MSP domain in the interval 9–126 (DIQTQPGTKI…RRKNLPIEYN (118 aa)).

As to expression, sperm.

The protein resides in the cell projection. Its subcellular location is the pseudopodium. It is found in the cytoplasm. It localises to the cytoskeleton. Central component in molecular interactions underlying sperm crawling. Forms an extensive filament system that extends from sperm villipoda, along the leading edge of the pseudopod. This Caenorhabditis elegans protein is Major sperm protein 33 (msp-33).